The primary structure comprises 276 residues: Phosphate import ATP-binding protein PstB (276 aa).

An ABC transporter domain is found at 23–271; sequence VNNKNIVYDT…PSDQRTEDYI (249 aa). 62-69 lines the ATP pocket; the sequence is GPSGCGKS.

It belongs to the ABC transporter superfamily. Phosphate importer (TC 3.A.1.7) family. The complex is composed of two ATP-binding proteins (PstB), two transmembrane proteins (PstC and PstA) and a solute-binding protein (PstS).

Its subcellular location is the cell membrane. The enzyme catalyses phosphate(out) + ATP + H2O = ADP + 2 phosphate(in) + H(+). Part of the ABC transporter complex PstSACB involved in phosphate import. Responsible for energy coupling to the transport system. This is Phosphate import ATP-binding protein PstB from Oceanobacillus iheyensis (strain DSM 14371 / CIP 107618 / JCM 11309 / KCTC 3954 / HTE831).